The following is a 1125-amino-acid chain: RGS domain-containing serine/threonine-protein kinase A (1125 aa).

4 disordered regions span residues Met-1–Lys-77, Arg-96–Asp-191, Gly-276–Asn-416, and Tyr-455–Glu-480. 2 stretches are compositionally biased toward low complexity: residues Ser-7–Asn-30 and Ser-37–Gly-66. Over residues Leu-121–Ile-136 the composition is skewed to basic and acidic residues. Composition is skewed to low complexity over residues Gln-159–Asp-191 and Asn-281–Ser-342. The segment covering Pro-343–Lys-361 has biased composition (polar residues). The span at Ile-362–Asn-416 shows a compositional bias: low complexity. In terms of domain architecture, RGS spans Lys-487–Lys-603. A compositionally biased stretch (low complexity) spans Thr-617–Ser-685. Disordered stretches follow at residues Thr-617–Ser-710 and Asn-723–Asn-762. The segment covering Glu-690–Ser-710 has biased composition (basic and acidic residues). Over residues Asn-723–Asn-735 the composition is skewed to low complexity. Residues Gly-736–Asn-748 are compositionally biased toward basic and acidic residues. A compositionally biased stretch (low complexity) spans Thr-749–Asn-762. Residues Val-842–Val-1097 enclose the Protein kinase domain. ATP-binding positions include Ile-848 to Val-856 and Lys-869. Residue Asp-963 is the Proton acceptor of the active site.

The protein belongs to the protein kinase superfamily. TKL Ser/Thr protein kinase family. Post-translationally, autophosphorylated.

It localises to the cytoplasm. Its subcellular location is the cell membrane. It catalyses the reaction L-seryl-[protein] + ATP = O-phospho-L-seryl-[protein] + ADP + H(+). The catalysed reaction is L-threonyl-[protein] + ATP = O-phospho-L-threonyl-[protein] + ADP + H(+). Up-regulated by cAMP. Its function is as follows. Serine/threonine kinase involved in negative regulation of chemotaxis. The protein is RGS domain-containing serine/threonine-protein kinase A (rckA) of Dictyostelium discoideum (Social amoeba).